Here is a 188-residue protein sequence, read N- to C-terminus: Elongation factor P (188 aa).

This sequence belongs to the elongation factor P family.

It localises to the cytoplasm. The protein operates within protein biosynthesis; polypeptide chain elongation. Functionally, involved in peptide bond synthesis. Stimulates efficient translation and peptide-bond synthesis on native or reconstituted 70S ribosomes in vitro. Probably functions indirectly by altering the affinity of the ribosome for aminoacyl-tRNA, thus increasing their reactivity as acceptors for peptidyl transferase. The sequence is that of Elongation factor P from Rickettsia canadensis (strain McKiel).